We begin with the raw amino-acid sequence, 478 residues long: Subtilisin-like protease 3 (478 aa).

Residues 1–17 (MKFSTILPILWANCCLC) form the signal peptide. The region spanning 70–167 (RYVIVFNEDI…FVEQETTVKI (98 aa)) is the Inhibitor I9 domain. In terms of domain architecture, Peptidase S8 spans 177–478 (PWGLHRVSHR…GGGKKLDGFW (302 aa)). Active-site charge relay system residues include D213, H245, and S407.

The protein belongs to the peptidase S8 family.

Serine protease with unknown substrate. This Saccharomyces cerevisiae (strain ATCC 204508 / S288c) (Baker's yeast) protein is Subtilisin-like protease 3 (YSP3).